We begin with the raw amino-acid sequence, 390 residues long: 1-deoxy-D-xylulose 5-phosphate reductoisomerase (390 aa).

NADPH contacts are provided by T10, G11, S12, I13, A36, K37, N38, and N122. K123 lines the 1-deoxy-D-xylulose 5-phosphate pocket. Residue E124 participates in NADPH binding. D148 provides a ligand contact to Mn(2+). Positions 149, 150, 174, and 197 each coordinate 1-deoxy-D-xylulose 5-phosphate. E150 serves as a coordination point for Mn(2+). Residue G203 coordinates NADPH. The 1-deoxy-D-xylulose 5-phosphate site is built by S210, N215, K216, and E219. Residue E219 participates in Mn(2+) binding.

The protein belongs to the DXR family. Mg(2+) is required as a cofactor. The cofactor is Mn(2+).

It carries out the reaction 2-C-methyl-D-erythritol 4-phosphate + NADP(+) = 1-deoxy-D-xylulose 5-phosphate + NADPH + H(+). Its pathway is isoprenoid biosynthesis; isopentenyl diphosphate biosynthesis via DXP pathway; isopentenyl diphosphate from 1-deoxy-D-xylulose 5-phosphate: step 1/6. Its function is as follows. Catalyzes the NADPH-dependent rearrangement and reduction of 1-deoxy-D-xylulose-5-phosphate (DXP) to 2-C-methyl-D-erythritol 4-phosphate (MEP). The chain is 1-deoxy-D-xylulose 5-phosphate reductoisomerase from Trichlorobacter lovleyi (strain ATCC BAA-1151 / DSM 17278 / SZ) (Geobacter lovleyi).